Here is an 851-residue protein sequence, read N- to C-terminus: Meiotically up-regulated gene 87 protein (851 aa).

Belongs to the nucleoporin interacting component (NIC) family.

The protein localises to the nucleus envelope. Has a role in meiosis. This Schizosaccharomyces pombe (strain 972 / ATCC 24843) (Fission yeast) protein is Meiotically up-regulated gene 87 protein (mug87).